Consider the following 299-residue polypeptide: HTH-type transcriptional regulator CrgA (299 aa).

An HTH lysR-type domain is found at 1–60 (MKTNSEELTVFVQVVESGSFSRAAEQLAMANSAVSRIVKRLEEKLGVNLLNRTTRQLSLT). Residues 20–39 (FSRAAEQLAMANSAVSRIVK) constitute a DNA-binding region (H-T-H motif).

Belongs to the LysR transcriptional regulatory family. As to quaternary structure, forms oligomers. Forms an octomeric ring-like structure in solution. May form hexadecamers when bound to target DNA.

Its activity is regulated as follows. Activation and repression activities are enhanced by the addition of alpha-methylene-gamma-butyrolactone (MBL), an inducer of NADPH:quinone oxidoreductase. Regulatory protein that activates transcription of mdaB, encoding a NADPH:quinone oxidoreductase, and represses its own transcription. Under the same experimental conditions, no regulation of transcription of pilus and capsule genes is detected. This is HTH-type transcriptional regulator CrgA from Neisseria meningitidis serogroup B (strain ATCC BAA-335 / MC58).